Reading from the N-terminus, the 1242-residue chain is Membrane-associated phosphatidylinositol transfer protein 1 (1242 aa).

Phosphothreonine occurs at positions 59, 282, and 287. Positions 259-330 (CNTGSEGPEA…HGGGVSPQSL (72 aa)) are disordered. Polar residues predominate over residues 272-282 (GKPSTETQPGT). A compositionally biased stretch (low complexity) spans 299–319 (ASPDASFGKQWSSSSRSSYSS). A phosphoserine mark is found at Ser-300, Ser-304, Ser-319, Ser-326, Ser-329, Ser-342, Ser-345, Ser-346, and Ser-373. A Phosphoserine; by CDK1 modification is found at Ser-382. Positions 581–593 (AGTGSRGSSRRGS) are enriched in low complexity. Positions 581–678 (AGTGSRGSSR…PASSEAPDGP (98 aa)) are disordered. Residues Ser-593, Ser-600, and Ser-621 each carry the phosphoserine modification. The segment covering 643–656 (GSQNSLQVAPTVTS) has biased composition (polar residues). A DDHD domain is found at 684–878 (LDFKVSGFFL…VAFILRQVIE (195 aa)). Phosphoserine is present on Ser-894. The disordered stretch occupies residues 1207–1242 (RSRGPSQVDLEGPGTPPTTLARGKTRSISLKLDSEE). Arg-1209 is subject to Omega-N-methylarginine. Ser-1235 is modified (phosphoserine).

This sequence belongs to the PtdIns transfer protein family. PI transfer class IIA subfamily. As to quaternary structure, interacts with PIK4CA and VAPB. Interacts with PTK2B via its C-terminus. Interacts with RHOA. Has higher affinity for the inactive, GDP-bound form of RHOA. The CDK1-phosphorylated form interacts with PLK1. Post-translationally, phosphorylated on multiple sites by CDK1 at the onset of mitosis. Phosphorylation facilitates dissociation from the Golgi complex and is required for interaction with PLK1. In terms of processing, phosphorylated on threonine residues upon treatment with oleic acid. Phosphorylated on tyrosine residues by PTK2B.

The protein localises to the cytoplasm. Its subcellular location is the golgi apparatus. It is found in the golgi stack membrane. It localises to the endoplasmic reticulum membrane. The protein resides in the lipid droplet. The protein localises to the cleavage furrow. Its subcellular location is the midbody. The enzyme catalyses a 1,2-diacyl-sn-glycero-3-phospho-(1D-myo-inositol)(in) = a 1,2-diacyl-sn-glycero-3-phospho-(1D-myo-inositol)(out). In terms of biological role, catalyzes the transfer of phosphatidylinositol (PI) between membranes. Binds PI, phosphatidylcholine (PC) and phosphatidic acid (PA) with the binding affinity order of PI &gt; PA &gt; PC. Regulates RHOA activity, and plays a role in cytoskeleton remodeling. Necessary for normal completion of cytokinesis. Plays a role in maintaining normal diacylglycerol levels in the Golgi apparatus. Necessary for maintaining the normal structure of the endoplasmic reticulum and the Golgi apparatus. Required for protein export from the endoplasmic reticulum and the Golgi. Binds calcium ions. This is Membrane-associated phosphatidylinositol transfer protein 1 (Pitpnm1) from Rattus norvegicus (Rat).